Here is a 284-residue protein sequence, read N- to C-terminus: Deoxyribonuclease-1 (284 aa).

An N-terminal signal peptide occupies residues 1-22 (MRGARLMGALLALAGLLQGALA). Asn-40 carries an N-linked (GlcNAc...) asparagine glycan. Glu-100 is an active-site residue. Cysteines 123 and 126 form a disulfide. An N-linked (GlcNAc...) asparagine glycan is attached at Asn-128. The active site involves His-156. Cys-195 and Cys-231 are joined by a disulfide.

This sequence belongs to the DNase I family. Requires Ca(2+) as cofactor. Mg(2+) serves as cofactor. Highest expression in pancreas.

It localises to the secreted. Its subcellular location is the zymogen granule. The protein localises to the nucleus envelope. It catalyses the reaction Endonucleolytic cleavage to 5'-phosphodinucleotide and 5'-phosphooligonucleotide end-products.. In terms of biological role, serum endocuclease secreted into body fluids by a wide variety of exocrine and endocrine organs. Expressed by non-hematopoietic tissues and preferentially cleaves protein-free DNA. Among other functions, seems to be involved in cell death by apoptosis. Binds specifically to G-actin and blocks actin polymerization. Together with DNASE1L3, plays a key role in degrading neutrophil extracellular traps (NETs). NETs are mainly composed of DNA fibers and are released by neutrophils to bind pathogens during inflammation. Degradation of intravascular NETs by DNASE1 and DNASE1L3 is required to prevent formation of clots that obstruct blood vessels and cause organ damage following inflammation. This is Deoxyribonuclease-1 (DNASE1) from Canis lupus familiaris (Dog).